A 235-amino-acid polypeptide reads, in one-letter code: MKRYRTLLFDVDDTILDFQAAEALALRLLFEDQNIPLTNDMKAQYKTINQGLWRAFEEGKMTRDEVVNTRFSALLKEYGYEADGALLEQKYRRFLEEGHQLIDGAFDLISNLQQQFDLYIVTNGVSHTQYKRLRDSGLFPFFKDIFVSEDTGFQKPMKEYFNYVFERIPQFSAEHTLIIGDSLTADIKGGQLAGLDTCWMNPDMKPNVPEIIPTYEIRKLEELYHILNIENTVSC.

Asp10 (nucleophile) is an active-site residue.

This sequence belongs to the HAD-like hydrolase superfamily. YjjG family.

The sequence is that of Putative HAD-hydrolase YfnB (yfnB) from Bacillus subtilis (strain 168).